Consider the following 213-residue polypeptide: Pyrrolidone-carboxylate peptidase (213 aa).

Residues Glu81, Cys144, and His166 contribute to the active site.

The protein belongs to the peptidase C15 family. Homotetramer.

Its subcellular location is the cytoplasm. It carries out the reaction Release of an N-terminal pyroglutamyl group from a polypeptide, the second amino acid generally not being Pro.. In terms of biological role, removes 5-oxoproline from various penultimate amino acid residues except L-proline. This chain is Pyrrolidone-carboxylate peptidase, found in Pseudomonas fluorescens (strain SBW25).